The sequence spans 307 residues: Phosphonates import ATP-binding protein PhnC (307 aa).

Positions 4 to 252 constitute an ABC transporter domain; the sequence is IRIERLSKTF…RLHALYGDDA (249 aa). Residue 37-44 coordinates ATP; sequence GASGSGKS. Over residues 265 to 275 the composition is skewed to basic and acidic residues; it reads AAREAAGEPAR. Residues 265 to 307 form a disordered region; the sequence is AAREAAGEPARRAPAAFDSAGSPDLPDSQPASPRRMLAASSMR.

Belongs to the ABC transporter superfamily. Phosphonates importer (TC 3.A.1.9.1) family. In terms of assembly, the complex is composed of two ATP-binding proteins (PhnC), two transmembrane proteins (PhnE) and a solute-binding protein (PhnD).

Its subcellular location is the cell inner membrane. The enzyme catalyses phosphonate(out) + ATP + H2O = phosphonate(in) + ADP + phosphate + H(+). Functionally, part of the ABC transporter complex PhnCDE involved in phosphonates import. Responsible for energy coupling to the transport system. The polypeptide is Phosphonates import ATP-binding protein PhnC (Burkholderia pseudomallei (strain 1710b)).